The chain runs to 127 residues: uncharacterized protein (127 aa).

This is an uncharacterized protein from Pasteurella multocida (strain Pm70).